The following is a 261-amino-acid chain: Probable electron transfer flavoprotein subunit beta (261 aa).

S2 bears the N-acetylserine mark.

This sequence belongs to the ETF beta-subunit/FixA family. In terms of assembly, heterodimer of an alpha and a beta subunit. Interacts with YFH1. The cofactor is FAD. Requires AMP as cofactor.

The protein resides in the mitochondrion matrix. The electron transfer flavoprotein serves as a specific electron acceptor for several dehydrogenases, including five acyl-CoA dehydrogenases, glutaryl-CoA and sarcosine dehydrogenase. It transfers the electrons to the main mitochondrial respiratory chain via ETF-ubiquinone oxidoreductase (ETF dehydrogenase). The polypeptide is Probable electron transfer flavoprotein subunit beta (CIR1) (Saccharomyces cerevisiae (strain ATCC 204508 / S288c) (Baker's yeast)).